Here is a 260-residue protein sequence, read N- to C-terminus: 14-3-3-like protein C (260 aa).

This sequence belongs to the 14-3-3 family.

The protein is 14-3-3-like protein C of Nicotiana tabacum (Common tobacco).